The sequence spans 490 residues: ATP synthase subunit beta, chloroplastic (490 aa).

170–177 (GGXGVGKT) contacts ATP.

Belongs to the ATPase alpha/beta chains family. F-type ATPases have 2 components, CF(1) - the catalytic core - and CF(0) - the membrane proton channel. CF(1) has five subunits: alpha(3), beta(3), gamma(1), delta(1), epsilon(1). CF(0) has four main subunits: a(1), b(1), b'(1) and c(9-12).

The protein resides in the plastid. It localises to the chloroplast thylakoid membrane. It catalyses the reaction ATP + H2O + 4 H(+)(in) = ADP + phosphate + 5 H(+)(out). Its function is as follows. Produces ATP from ADP in the presence of a proton gradient across the membrane. The catalytic sites are hosted primarily by the beta subunits. The chain is ATP synthase subunit beta, chloroplastic from Ipomoea coccinea (Scarlet morning-glory).